We begin with the raw amino-acid sequence, 147 residues long: Large ribosomal subunit protein bL9 (147 aa).

Belongs to the bacterial ribosomal protein bL9 family.

Functionally, binds to the 23S rRNA. The chain is Large ribosomal subunit protein bL9 from Clostridium botulinum (strain ATCC 19397 / Type A).